The sequence spans 483 residues: Acetyl-coenzyme A carboxylase carboxyl transferase subunit beta, chloroplastic (483 aa).

Residues 219–483 enclose the CoA carboxyltransferase N-terminal domain; that stretch reads LWVQCENCYG…LHTFFPLNQN (265 aa). Zn(2+)-binding residues include C223, C226, C242, and C245. Residues 223–245 form a C4-type zinc finger; the sequence is CENCYGLNYKKFFKSKMNLCEQC.

The protein belongs to the AccD/PCCB family. In terms of assembly, acetyl-CoA carboxylase is a heterohexamer composed of biotin carboxyl carrier protein, biotin carboxylase and 2 subunits each of ACCase subunit alpha and ACCase plastid-coded subunit beta (accD). It depends on Zn(2+) as a cofactor.

It is found in the plastid. It localises to the chloroplast stroma. It carries out the reaction N(6)-carboxybiotinyl-L-lysyl-[protein] + acetyl-CoA = N(6)-biotinyl-L-lysyl-[protein] + malonyl-CoA. Its pathway is lipid metabolism; malonyl-CoA biosynthesis; malonyl-CoA from acetyl-CoA: step 1/1. Functionally, component of the acetyl coenzyme A carboxylase (ACC) complex. Biotin carboxylase (BC) catalyzes the carboxylation of biotin on its carrier protein (BCCP) and then the CO(2) group is transferred by the transcarboxylase to acetyl-CoA to form malonyl-CoA. This chain is Acetyl-coenzyme A carboxylase carboxyl transferase subunit beta, chloroplastic, found in Guizotia abyssinica (Niger).